The following is a 187-amino-acid chain: Probable cobalt-precorrin-6B C(15)-methyltransferase (decarboxylating) (187 aa).

Residues T17, 41 to 45 (GCGTG), D62, and G91 each bind S-adenosyl-L-methionine.

The protein belongs to the methyltransferase superfamily. Archaeal-type CbiT family.

The enzyme catalyses Co-precorrin-6B + S-adenosyl-L-methionine = Co-precorrin-7 + S-adenosyl-L-homocysteine + CO2. Its pathway is cofactor biosynthesis; adenosylcobalamin biosynthesis; cob(II)yrinate a,c-diamide from sirohydrochlorin (anaerobic route): step 8/10. Functionally, catalyzes the methylation of C-15 in cobalt-precorrin-6B followed by the decarboxylation of C-12 to form cobalt-precorrin-7. In Methanobrevibacter smithii (strain ATCC 35061 / DSM 861 / OCM 144 / PS), this protein is Probable cobalt-precorrin-6B C(15)-methyltransferase (decarboxylating).